A 480-amino-acid polypeptide reads, in one-letter code: Selenium-binding protein 3 (480 aa).

Cys-12 and Cys-13 together coordinate selenite.

This sequence belongs to the selenium-binding protein family. In terms of tissue distribution, expressed in young seedlings, mostly in roots.

The protein is Selenium-binding protein 3 (SBP3) of Arabidopsis thaliana (Mouse-ear cress).